The primary structure comprises 471 residues: (13S,14R)-1,13-dihydroxy-N-methylcanadine 13-O-acetyltransferase AT1 (471 aa).

The protein belongs to the plant acyltransferase family.

It catalyses the reaction (13S,14R)-1,13-dihydroxy-N-methylcanadine + acetyl-CoA = (13S,14R)-13-O-acetyl-1-hydroxy-N-methylcanadine + CoA. Its pathway is alkaloid biosynthesis. Acetyltransferase involved in the biosynthesis of the benzylisoquinoline alkaloid noscapine. Converts (13S,14R)-1,13-dihydroxy-N-methylcanadine to (13S,14R)-13-O-acetyl-1-hydroxy-N-methylcanadine. This is (13S,14R)-1,13-dihydroxy-N-methylcanadine 13-O-acetyltransferase AT1 from Papaver somniferum (Opium poppy).